Here is a 605-residue protein sequence, read N- to C-terminus: IQ domain-containing protein IQM2 (605 aa).

An IQ domain is found at 105-134 (KHEAAIKLQKVYKSFRTRRKLADCAVLVEQ). Positions 408–505 (QDKVDPSGEE…EEGETKESEV (98 aa)) are disordered. Residues 425–440 (SISRKQSDLETPEKME) show a composition bias toward basic and acidic residues. Over residues 462 to 480 (DYDSGDDEEEEEEMFELEQ) the composition is skewed to acidic residues. Over residues 481 to 490 (ESMPSEQSSP) the composition is skewed to low complexity. A compositionally biased stretch (basic and acidic residues) spans 491–505 (RGEEKEEGETKESEV).

In terms of tissue distribution, expressed in rosette and cauline leaves, stems, flowers and siliques, and at lower levels in roots.

It localises to the cytoplasm. The protein localises to the nucleus. In terms of biological role, may be involved in biotic and abiotic stress responses. This Arabidopsis thaliana (Mouse-ear cress) protein is IQ domain-containing protein IQM2.